The following is a 280-amino-acid chain: NAD(+) hydrolase TirS (280 aa).

Residues 22-94 (MNKLPDEIDR…KINLQKEQSR (73 aa)) are a coiled coil. The 135-residue stretch at 141–275 (IEYDVFLSHS…EIVEKIYQVI (135 aa)) folds into the TIR domain. NAD(+)-binding positions include 150-151 (SS) and glutamate 180. Glutamate 216 is an active-site residue.

It localises to the secreted. It carries out the reaction NAD(+) + H2O = ADP-D-ribose + nicotinamide + H(+). The enzyme catalyses NADP(+) + H2O = ADP-D-ribose 2'-phosphate + nicotinamide + H(+). Functionally, virulence factor that suppresses host Toll-like receptor 2 (TLR2)-mediated NF-kappa-B signaling upon infection. NAD(+) hydrolase (NADase) that catalyzes cleavage of NAD(+) into ADP-D-ribose (ADPR) and nicotinamide. Also able to hydrolyze NADP(+), but not other NAD(+)-related molecules. Able to reduce NAD(+) levels in host cells. The polypeptide is NAD(+) hydrolase TirS (Staphylococcus aureus (strain MSSA476)).